Consider the following 133-residue polypeptide: Holo-[acyl-carrier-protein] synthase (133 aa).

Residues Asp-8 and Glu-56 each coordinate Mg(2+).

This sequence belongs to the P-Pant transferase superfamily. AcpS family. The cofactor is Mg(2+).

It is found in the cytoplasm. It carries out the reaction apo-[ACP] + CoA = holo-[ACP] + adenosine 3',5'-bisphosphate + H(+). Its function is as follows. Transfers the 4'-phosphopantetheine moiety from coenzyme A to a Ser of acyl-carrier-protein. The polypeptide is Holo-[acyl-carrier-protein] synthase (Clostridium perfringens (strain 13 / Type A)).